The sequence spans 523 residues: Cyclin-dependent kinase 17 (523 aa).

Phosphoserine is present on Ser9. Residues 30–55 (TIEENSSKDNEPIVKNGRPPTSHSMH) are disordered. A phosphoserine mark is found at Ser80, Ser92, and Ser105. Residues 103-123 (MGSDGESDQASGTSSDEVQSP) are disordered. The span at 110–123 (DQASGTSSDEVQSP) shows a compositional bias: polar residues. Phosphoserine occurs at positions 137, 146, 165, and 180. The 282-residue stretch at 192 to 473 (YIKLEKLGEG…AEEAMKHVYF (282 aa)) folds into the Protein kinase domain. ATP is bound by residues 198 to 206 (LGEGTYATV) and Lys221. Asp313 acts as the Proton acceptor in catalysis. Residues 501–523 (PGFRNSSYPETGHGKNRRQSMLF) form a disordered region. Residues 514–523 (GKNRRQSMLF) are compositionally biased toward basic residues.

Belongs to the protein kinase superfamily. CMGC Ser/Thr protein kinase family. CDC2/CDKX subfamily. In terms of assembly, found in a complex containing CABLES1, CDK16 and TDRD7. Interacts with TDRD7.

It carries out the reaction L-seryl-[protein] + ATP = O-phospho-L-seryl-[protein] + ADP + H(+). The catalysed reaction is L-threonyl-[protein] + ATP = O-phospho-L-threonyl-[protein] + ADP + H(+). May play a role in terminally differentiated neurons. Has a Ser/Thr-phosphorylating activity for histone H1. This chain is Cyclin-dependent kinase 17 (CDK17), found in Homo sapiens (Human).